A 258-amino-acid polypeptide reads, in one-letter code: Imidazole glycerol phosphate synthase subunit HisF (258 aa).

Catalysis depends on residues D11 and D130.

It belongs to the HisA/HisF family. As to quaternary structure, heterodimer of HisH and HisF.

It is found in the cytoplasm. The catalysed reaction is 5-[(5-phospho-1-deoxy-D-ribulos-1-ylimino)methylamino]-1-(5-phospho-beta-D-ribosyl)imidazole-4-carboxamide + L-glutamine = D-erythro-1-(imidazol-4-yl)glycerol 3-phosphate + 5-amino-1-(5-phospho-beta-D-ribosyl)imidazole-4-carboxamide + L-glutamate + H(+). It participates in amino-acid biosynthesis; L-histidine biosynthesis; L-histidine from 5-phospho-alpha-D-ribose 1-diphosphate: step 5/9. Its function is as follows. IGPS catalyzes the conversion of PRFAR and glutamine to IGP, AICAR and glutamate. The HisF subunit catalyzes the cyclization activity that produces IGP and AICAR from PRFAR using the ammonia provided by the HisH subunit. This chain is Imidazole glycerol phosphate synthase subunit HisF, found in Shigella dysenteriae serotype 1 (strain Sd197).